The sequence spans 552 residues: MEKVQQTIRAPRGTELQTKGWVQEAALRMLMNNLDPEVAEKPEELVVYGGIGRAARNWESYQAIVDSLKTLESDETLLVQSGKPVAIFKSHEDAPRVLLANSNLVPKWANWDHFRELEKKGLMMYGQMTAGSWIYIGTQGILQGTYETFGEAARQHFDGSLKGTLTLTAGLGGMGGAQPLAVTMNGGVVIAIDVDKRSIDRRIEKRYCDMYTESLEEALTVANEYKEKKEPISIGLLGNAAEILPELVKRDITPDLVTDQTSAHDPLNGYIPVGYTLEEAAKLREKDPERYVQLSKESMTKHVEAMLAMQEKGAITFDYGNNIRQVAFDEGLKNAFDFPGFVPAFIRPLFCEGKGPFRWVALSGDPEDIYKTDEVILREFADNEHLCNWIRMARQQVEFQGLPSRICWLGYGERAKFGRIINEMVANGELSAPIVIGRDHLDCGSVASPNRETEAMKDGSDAVADWPILNALINSVNGASWVSVHHGGGVGMGYSLHAGMVIVADGTEAAAKRIERVLTSDPGMGVVRHVDAGYDLAVETAKEKGVNIPMMK.

NAD(+) is bound by residues 49–50 (GG), Gln-127, 173–175 (GMG), Asp-193, 239–240 (NA), 260–264 (QTSAH), 270–271 (YI), and Tyr-319. The active site involves Cys-407. Gly-489 contacts NAD(+).

Belongs to the urocanase family. NAD(+) is required as a cofactor.

Its subcellular location is the cytoplasm. It catalyses the reaction 4-imidazolone-5-propanoate = trans-urocanate + H2O. It participates in amino-acid degradation; L-histidine degradation into L-glutamate; N-formimidoyl-L-glutamate from L-histidine: step 2/3. Catalyzes the conversion of urocanate to 4-imidazolone-5-propionate. In Bacillus cereus (strain B4264), this protein is Urocanate hydratase.